An 84-amino-acid polypeptide reads, in one-letter code: Small ribosomal subunit protein uS17 (84 aa).

The protein belongs to the universal ribosomal protein uS17 family. Part of the 30S ribosomal subunit.

One of the primary rRNA binding proteins, it binds specifically to the 5'-end of 16S ribosomal RNA. In Proteus mirabilis (strain HI4320), this protein is Small ribosomal subunit protein uS17.